A 208-amino-acid polypeptide reads, in one-letter code: NADH-ubiquinone oxidoreductase chain 4 (208 aa).

6 helical membrane passes run 23–43 (VWIN…NLLW), 60–80 (PLSA…LLAS), 93–113 (KLYI…FSAN), 114–134 (ELIM…IIIT), 147–167 (IYFL…LIYI), and 185–205 (PINQ…AFMV).

Belongs to the complex I subunit 4 family. In terms of assembly, core subunit of respiratory chain NADH dehydrogenase (Complex I) which is composed of 45 different subunits.

The protein localises to the mitochondrion inner membrane. The enzyme catalyses a ubiquinone + NADH + 5 H(+)(in) = a ubiquinol + NAD(+) + 4 H(+)(out). In terms of biological role, core subunit of the mitochondrial membrane respiratory chain NADH dehydrogenase (Complex I) which catalyzes electron transfer from NADH through the respiratory chain, using ubiquinone as an electron acceptor. Essential for the catalytic activity and assembly of complex I. The polypeptide is NADH-ubiquinone oxidoreductase chain 4 (MT-ND4) (Microtus pennsylvanicus (Meadow vole)).